The primary structure comprises 393 residues: NAD(P)H-quinone oxidoreductase subunit H, chloroplastic (393 aa).

It belongs to the complex I 49 kDa subunit family. NDH is composed of at least 16 different subunits, 5 of which are encoded in the nucleus.

It localises to the plastid. It is found in the chloroplast thylakoid membrane. It catalyses the reaction a plastoquinone + NADH + (n+1) H(+)(in) = a plastoquinol + NAD(+) + n H(+)(out). The catalysed reaction is a plastoquinone + NADPH + (n+1) H(+)(in) = a plastoquinol + NADP(+) + n H(+)(out). NDH shuttles electrons from NAD(P)H:plastoquinone, via FMN and iron-sulfur (Fe-S) centers, to quinones in the photosynthetic chain and possibly in a chloroplast respiratory chain. The immediate electron acceptor for the enzyme in this species is believed to be plastoquinone. Couples the redox reaction to proton translocation, and thus conserves the redox energy in a proton gradient. This is NAD(P)H-quinone oxidoreductase subunit H, chloroplastic from Chlorokybus atmophyticus (Soil alga).